We begin with the raw amino-acid sequence, 366 residues long: 2-aminoethylphosphonate--pyruvate transaminase (366 aa).

Position 194 is an N6-(pyridoxal phosphate)lysine (K194).

Belongs to the class-V pyridoxal-phosphate-dependent aminotransferase family. PhnW subfamily. As to quaternary structure, homodimer. The cofactor is pyridoxal 5'-phosphate.

It carries out the reaction (2-aminoethyl)phosphonate + pyruvate = phosphonoacetaldehyde + L-alanine. Its function is as follows. Involved in phosphonate degradation. The protein is 2-aminoethylphosphonate--pyruvate transaminase of Lactiplantibacillus plantarum (strain ATCC BAA-793 / NCIMB 8826 / WCFS1) (Lactobacillus plantarum).